The primary structure comprises 347 residues: MSVMFDSQAAIYPFPPKPTPLNDDEKQFYREKIKRLLKERNAVMVAHYYTDPEIQQLAEETGGCISDSLEMARFGAKHAASTLLVAGVRFMGETAKILSPEKNVLMPTLAAECSLDLGCPIDEFSAFCDAHPDRTVVVYANTSAAVKARADWVVTSSIAVELIEHLDSLGEKIIWAPDRHLGNYVQKQTRADVLCWQGACIVHDEFKTQALTRLKKIYPDAAILVHPESPRSIVEMADAVGSTSQLIKAAKTLPHRQLIVATDRGIFYKMQQAVPDKELLEAPTAGEGATCRSCAHCPWMAMNGLKAIAEGLEQGGAAHEIQVDAALRESALLPLNRMLDFAATLRV.

Residues H47 and S68 each coordinate iminosuccinate. Residue C113 coordinates [4Fe-4S] cluster. Residues 139–141 and S156 contribute to the iminosuccinate site; that span reads YAN. A [4Fe-4S] cluster-binding site is contributed by C200. Iminosuccinate is bound by residues 226 to 228 and T243; that span reads HPE. C297 serves as a coordination point for [4Fe-4S] cluster.

The protein belongs to the quinolinate synthase family. Type 1 subfamily. [4Fe-4S] cluster serves as cofactor.

Its subcellular location is the cytoplasm. It carries out the reaction iminosuccinate + dihydroxyacetone phosphate = quinolinate + phosphate + 2 H2O + H(+). It participates in cofactor biosynthesis; NAD(+) biosynthesis; quinolinate from iminoaspartate: step 1/1. Its function is as follows. Catalyzes the condensation of iminoaspartate with dihydroxyacetone phosphate to form quinolinate. The sequence is that of Quinolinate synthase from Salmonella typhi.